Reading from the N-terminus, the 282-residue chain is MEKIFLNGEFVSPSEAKVSYNDRGYVFGDGIYEYIRVYNGKLFTVTEHYERFLRSANEIGLDLNYSVEELIELSRKLVDMNQIETGAIYIQATRGVAERNHSFPTPEVEPAIVAYTKSYDRPYDHLENGVNGVTVEDIRWLRCDIKSLNLLGNVLAKEYAVKYNAVEAIQHRGETVTEGSSSNAYAIKDGVIYTHPINNYILNGITRIVIKKIAEDYNIPFKEETFTVDFLKNADEVIVSSTSAEVTPVIKLDGEPVNDGKVGPITRQLQEGFEKYIESHSI.

Residue tyrosine 32 participates in substrate binding. Arginine 51 is a pyridoxal 5'-phosphate binding site. Arginine 99 and histidine 101 together coordinate substrate. Lysine 146 serves as the catalytic Proton acceptor. Position 146 is an N6-(pyridoxal phosphate)lysine (lysine 146). Glutamate 178 contributes to the pyridoxal 5'-phosphate binding site.

It belongs to the class-IV pyridoxal-phosphate-dependent aminotransferase family. Homodimer. Requires pyridoxal 5'-phosphate as cofactor.

It carries out the reaction D-alanine + 2-oxoglutarate = D-glutamate + pyruvate. Functionally, acts on the D-isomers of alanine, leucine, aspartate, glutamate, aminobutyrate, norvaline and asparagine. The enzyme transfers an amino group from a substrate D-amino acid to the pyridoxal phosphate cofactor to form pyridoxamine and an alpha-keto acid in the first half-reaction. The second half-reaction is the reverse of the first, transferring the amino group from the pyridoxamine to a second alpha-keto acid to form the product D-amino acid via a ping-pong mechanism. This is an important process in the formation of D-alanine and D-glutamate, which are essential bacterial cell wall components. This chain is D-alanine aminotransferase (dat), found in Staphylococcus aureus (strain COL).